The primary structure comprises 259 residues: Protein SODIUM POTASSIUM ROOT DEFECTIVE 2 (259 aa).

The interval 141 to 165 is disordered; that stretch reads PDSITGSVDQDPAKTVEAEAPAGED. A compositionally biased stretch (basic and acidic residues) spans 151–165; sequence DPAKTVEAEAPAGED. The region spanning 180–246 is the HMA domain; sequence QQVVVLKVSL…KVKNAQFWTN (67 aa). Positions 191 and 194 each coordinate a metal cation.

This Arabidopsis thaliana (Mouse-ear cress) protein is Protein SODIUM POTASSIUM ROOT DEFECTIVE 2.